Reading from the N-terminus, the 540-residue chain is Zinc finger protein 768 (540 aa).

Disordered stretches follow at residues Met-1–Gln-166 and Thr-239–Pro-258. Residues Ser-17, Ser-18, and Ser-23 each carry the phosphoserine modification. A Phosphotyrosine modification is found at Tyr-27. Phosphoserine is present on Ser-33. A compositionally biased stretch (acidic residues) spans Glu-34–Glu-53. 11 positions are modified to phosphoserine: Ser-62, Ser-69, Ser-76, Ser-83, Ser-90, Ser-97, Ser-104, Ser-107, Ser-111, Ser-118, and Ser-125. A compositionally biased stretch (low complexity) spans Ser-62–Pro-77. Polar residues predominate over residues Ser-107–Pro-119. At Tyr-128 the chain carries Phosphotyrosine. Ser-132 bears the Phosphoserine mark. A Phosphotyrosine modification is found at Tyr-135. A Phosphoserine modification is found at Ser-139. Tyr-142 carries the post-translational modification Phosphotyrosine. Residues Ser-144 and Ser-147 each carry the phosphoserine modification. The segment covering Tyr-149–Gln-166 has biased composition (polar residues). Residue Thr-158 is modified to Phosphothreonine. Ser-160 carries the phosphoserine modification. The C2H2-type 1 zinc-finger motif lies at Asn-261–His-283. Phosphothreonine is present on Thr-284. Tyr-289 carries the phosphotyrosine modification. 4 consecutive C2H2-type zinc fingers follow at residues Tyr-289 to His-311, Tyr-317 to His-339, Tyr-345 to His-367, and Tyr-373 to His-395. A phosphoserine mark is found at Ser-295 and Ser-299. A Phosphothreonine modification is found at Thr-396. 5 C2H2-type zinc fingers span residues Phe-401–His-423, Phe-429–His-451, Tyr-457–His-479, Tyr-485–His-507, and Tyr-513–His-535. Residue Ser-442 is modified to Phosphoserine.

Belongs to the krueppel C2H2-type zinc-finger protein family. In terms of assembly, interacts (via zinc-finger domains) with TP53 (via N-terminus); interaction might be facilitated by TP53 oligomerization state. Interacts with ELP3. In terms of processing, may be phosphorylated at residue 'Ser-5' of the tandem heptapeptide repeats in the N-terminus. Phosphorylation might be increased upon RAS pathway activation and negatively regulate protein stability.

It is found in the nucleus. The protein resides in the chromosome. Binds to mammalian-wide interspersed repeat (MIRs) sequences in euchromatin and promoter regions of genes at the consensus sequence 5'-GCTGTGTG-[N20]-CCTCTCTG-3', consisting of two anchor regions connected by a linker region; the linker region probably does not contribute to the binding specificity. Required for cell homeostasis. May be involved in transcriptional regulation. In Homo sapiens (Human), this protein is Zinc finger protein 768 (ZNF768).